We begin with the raw amino-acid sequence, 147 residues long: Cyanate hydratase (147 aa).

Catalysis depends on residues arginine 88, glutamate 91, and serine 114.

It belongs to the cyanase family.

It catalyses the reaction cyanate + hydrogencarbonate + 3 H(+) = NH4(+) + 2 CO2. In terms of biological role, catalyzes the reaction of cyanate with bicarbonate to produce ammonia and carbon dioxide. This chain is Cyanate hydratase, found in Albidiferax ferrireducens (strain ATCC BAA-621 / DSM 15236 / T118) (Rhodoferax ferrireducens).